The primary structure comprises 309 residues: Flavonol sulfotransferase-like (309 aa).

Position 59 to 64 (59 to 64 (KTGTTW)) interacts with 3'-phosphoadenylyl sulfate. The active-site Proton acceptor is His119. Residues Arg141, Ser149, Tyr207, and 274 to 276 (RKG) contribute to the 3'-phosphoadenylyl sulfate site.

The protein belongs to the sulfotransferase 1 family.

The protein localises to the cytoplasm. This Flaveria bidentis (Coastal plain yellowtops) protein is Flavonol sulfotransferase-like.